We begin with the raw amino-acid sequence, 412 residues long: Multifunctional CCA protein (412 aa).

The ATP site is built by Gly-8 and Arg-11. Positions 8 and 11 each coordinate CTP. Asp-21 and Asp-23 together coordinate Mg(2+). 3 residues coordinate ATP: Arg-91, Arg-137, and Arg-140. 3 residues coordinate CTP: Arg-91, Arg-137, and Arg-140. One can recognise an HD domain in the interval 228–329; sequence TGIHTLMTLS…VKLFDSIDAW (102 aa).

Belongs to the tRNA nucleotidyltransferase/poly(A) polymerase family. Bacterial CCA-adding enzyme type 1 subfamily. In terms of assembly, monomer. Can also form homodimers and oligomers. Mg(2+) serves as cofactor. Ni(2+) is required as a cofactor.

It carries out the reaction a tRNA precursor + 2 CTP + ATP = a tRNA with a 3' CCA end + 3 diphosphate. The catalysed reaction is a tRNA with a 3' CCA end + 2 CTP + ATP = a tRNA with a 3' CCACCA end + 3 diphosphate. Functionally, catalyzes the addition and repair of the essential 3'-terminal CCA sequence in tRNAs without using a nucleic acid template. Adds these three nucleotides in the order of C, C, and A to the tRNA nucleotide-73, using CTP and ATP as substrates and producing inorganic pyrophosphate. tRNA 3'-terminal CCA addition is required both for tRNA processing and repair. Also involved in tRNA surveillance by mediating tandem CCA addition to generate a CCACCA at the 3' terminus of unstable tRNAs. While stable tRNAs receive only 3'-terminal CCA, unstable tRNAs are marked with CCACCA and rapidly degraded. In Shigella dysenteriae serotype 1 (strain Sd197), this protein is Multifunctional CCA protein.